Here is a 570-residue protein sequence, read N- to C-terminus: PTS system lactose-specific EIICB component (570 aa).

Positions 9–410 (IEKGKPFFEK…VVDIIIYYPF (402 aa)) constitute a PTS EIIC type-3 domain. Helical transmembrane passes span 31 to 51 (GFIS…IAYV), 65 to 85 (AILM…VAGT), 104 to 124 (INFI…ASDP), 133 to 153 (AFMG…TVIV), 178 to 198 (FKDL…DLVI), 223 to 243 (GWIG…VGIH), 283 to 303 (MFIV…MFMW), 340 to 360 (VFFI…KLFV), and 382 to 402 (IIMG…LIVV). In terms of domain architecture, PTS EIIB type-3 spans 467-570 (QTNVLVLCAG…LDFVQQQFEN (104 aa)). The active-site Phosphocysteine intermediate; for EIIB activity is the Cys-474. Phosphocysteine; by EIIA is present on Cys-474.

The protein localises to the cell membrane. The enzyme catalyses lactose(out) + N(pros)-phospho-L-histidyl-[protein] = lactose 6-phosphate(in) + L-histidyl-[protein]. In terms of biological role, the phosphoenolpyruvate-dependent sugar phosphotransferase system (sugar PTS), a major carbohydrate active transport system, catalyzes the phosphorylation of incoming sugar substrates concomitantly with their translocation across the cell membrane. The enzyme II LacEF PTS system is involved in lactose transport. This Staphylococcus aureus (strain MSSA476) protein is PTS system lactose-specific EIICB component.